The sequence spans 512 residues: MAVSRWKAVGSTLLAAFLVGLVVLIAVLLIRTYTLPTAVRKWNRNESLITELAEKERKQLVEALKGAIRIPTVSFSEEEQNTTALREFGEYIQKVFPQVFSSSLIQHEVLGGYSHLFKVQGSDHNLLPYMLLAHIDVVPAPPESWEVPPFSGEERDGYIYGRGTLDDKNCVIGILQSLEFLLKRGHKPRRSFYIGLGHDEEISGHKGAQKIVEKLQSQGVKLAFVLDEGLAVLDGVIQGISQPVALVGTTEKGSVTLDLTVNRLPGHSSMPPSETSIGILAAAVSRLEQNMMPNMFGNGPEQDMFEHLSTKFDFPLNIIMANLWLFSPILSRILELSPSTNAIVRTTTALTIFKAGIKSNVIPPTATATVNFRLHPAQTVQEVLDIVQNTIKDERVELSVLNSFDPLPVSPNDMSLGYHILQRTIHDVFSGPPVAPGVCVGNTDSRHFVNLTNSIYRFSPVVLKKEDVDRIHGLNERISKEAIELLVQFYIQLIQNSDTDNIPPPHLDTHEL.

Positions 1–34 (MAVSRWKAVGSTLLAAFLVGLVVLIAVLLIRTYT) are cleaved as a signal peptide. Asn-45 and Asn-81 each carry an N-linked (GlcNAc...) asparagine glycan. His-134 is a binding site for Zn(2+). Residue Asp-136 is part of the active site. Asp-166 provides a ligand contact to Zn(2+). Glu-200 functions as the Proton acceptor in the catalytic mechanism. Zn(2+) is bound by residues Glu-201 and Asp-227. A glycan (N-linked (GlcNAc...) asparagine) is linked at Asn-450. Residue His-472 coordinates Zn(2+).

The protein belongs to the peptidase M20A family.

The protein localises to the secreted. It carries out the reaction an N-acyl-L-amino acid + H2O = an L-alpha-amino acid + a carboxylate. The enzyme catalyses an N-acyl-aromatic L-alpha-amino acid + H2O = an aromatic L-alpha-amino acid + a carboxylate. The catalysed reaction is N-(5Z,8Z,11Z,14Z)-eicosatetraenoyl-glycine + H2O = (5Z,8Z,11Z,14Z)-eicosatetraenoate + glycine. It catalyses the reaction N-hexadecanoyl-L-phenylalanine + H2O = hexadecanoate + L-phenylalanine. It carries out the reaction N-octadecanoyl-L-phenylalanine + H2O = octadecanoate + L-phenylalanine. The enzyme catalyses N-(4Z,7Z,10Z,13Z,16Z,19Z-docosahexaenoyl)-L-phenylalanine + H2O = (4Z,7Z,10Z,13Z,16Z,19Z)-docosahexaenoate + L-phenylalanine. The catalysed reaction is N-(9Z-octadecenoyl)-L-asparagine + H2O = L-asparagine + (9Z)-octadecenoate. It catalyses the reaction (9Z)-octadecenoate + glycine = N-(9Z-octadecenoyl)glycine + H2O. It carries out the reaction N-(9Z-octadecenoyl)-L-lysine + H2O = L-lysine + (9Z)-octadecenoate. The enzyme catalyses N-(9Z-octadecenoyl)-L-methionine + H2O = (9Z)-octadecenoate + L-methionine. The catalysed reaction is N-(9Z-octadecenoyl)-L-serine + H2O = L-serine + (9Z)-octadecenoate. It catalyses the reaction N-(9Z-octadecenoyl)-L-tryptophan + H2O = L-tryptophan + (9Z)-octadecenoate. It carries out the reaction N-(9Z-octadecenoyl)-L-tyrosine + H2O = L-tyrosine + (9Z)-octadecenoate. The enzyme catalyses N-(9Z-octadecenoyl)-L-glutamine + H2O = L-glutamine + (9Z)-octadecenoate. The catalysed reaction is N-(5Z,8Z,11Z,14Z-eicosatetraenoyl)-L-serine + H2O = (5Z,8Z,11Z,14Z)-eicosatetraenoate + L-serine. It catalyses the reaction (5Z,8Z,11Z,14Z)-eicosatetraenoate + L-phenylalanine = N-(5Z,8Z,11Z,14Z-eicosatetraenoyl)-L-phenylalanine + H2O. It carries out the reaction N-(9Z-octadecenoyl)-L-leucine + H2O = L-leucine + (9Z)-octadecenoate. The enzyme catalyses L-phenylalanine + (9Z)-octadecenoate = N-(9Z-octadecenoyl)-L-phenylalanine + H2O. It participates in amino-acid metabolism. It functions in the pathway energy metabolism; electron transfer. The protein operates within lipid metabolism; fatty acid metabolism. Its activity is regulated as follows. Lipoproteins are powerful coactivators of PM20D1 activity in vitro and NAA biosynthesis in vivo. Functionally, secreted enzyme that regulates the endogenous N-fatty acyl amino acid (NAAs) tissue and circulating levels by functioning as a bidirectional NAA synthase/hydrolase. It condenses free fatty acids and free amino acids to generate NAAs and bidirectionally catalyzes the reverse hydrolysis reaction. Some of these NAAs stimulate oxidative metabolism via mitochondrial uncoupling, increasing energy expenditure in a UPC1-independent manner. Thereby, this secreted protein may indirectly regulate whole body energy expenditure. PM20D1 circulates in tight association with both low- and high-density (LDL and HDL,respectively) lipoprotein particles. The protein is N-fatty-acyl-amino acid synthase/hydrolase PM20D1 of Xenopus tropicalis (Western clawed frog).